We begin with the raw amino-acid sequence, 827 residues long: Villin-1 (827 aa).

Residues Met-1 to Met-126 are necessary for homodimerization. Residues Met-1–Asn-734 are core. Residues Met-27–Gly-76 form a Gelsolin-like 1 repeat. LPA/PIP2-binding site regions lie at residues Lys-112–Lys-119 and Arg-138–Arg-146. Gelsolin-like repeat units lie at residues Val-148–Leu-188 and Val-265–Lys-309. Position 366 is a phosphoserine (Ser-366). Gelsolin-like repeat units lie at residues Asn-407 to Thr-457, Thr-528 to Glu-568, and Phe-631 to Lys-672. Residue Ser-735 is modified to Phosphoserine. The interval Ser-735–Phe-827 is headpiece. Residues Ser-761–Phe-827 form the HP domain. An LPA/PIP2-binding site 3 region spans residues Lys-816–Lys-824.

It belongs to the villin/gelsolin family. Monomer. Homodimer; homodimerization is necessary for actin-bundling. Associates with F-actin; phosphorylation at tyrosine residues decreases the association with F-actin. Interacts (phosphorylated at C-terminus tyrosine phosphorylation sites) with PLCG1 (via the SH2 domains). Interacts (phosphorylated form) with PLCG1; the interaction is enhanced by hepatocyte growth factor (HGF). Phosphorylated on tyrosine residues by SRC. The unphosphorylated form increases the initial rate of actin-nucleating activity, whereas the tyrosine-phosphorylated form inhibits actin-nucleating activity, enhances actin-bundling activity and enhances actin-severing activity by reducing high Ca(2+) requirements. The tyrosine-phosphorylated form does not regulate actin-capping activity. Tyrosine phosphorylation is essential for cell migration: tyrosine phosphorylation sites in the N-terminus half regulate actin reorganization and cell morphology, whereas tyrosine phosphorylation sites in the C-terminus half regulate cell migration via interaction with PLCG1. Tyrosine phosphorylation is induced by epidermal growth factor (EGF) and stimulates cell migration.

Its subcellular location is the cytoplasm. It localises to the cytoskeleton. It is found in the cell projection. The protein resides in the lamellipodium. The protein localises to the ruffle. Its subcellular location is the microvillus. It localises to the filopodium tip. It is found in the filopodium. Functionally, epithelial cell-specific Ca(2+)-regulated actin-modifying protein that modulates the reorganization of microvillar actin filaments. Plays a role in the actin nucleation, actin filament bundle assembly, actin filament capping and severing. Binds phosphatidylinositol 4,5-bisphosphate (PIP2) and lysophosphatidic acid (LPA); binds LPA with higher affinity than PIP2. Binding to LPA increases its phosphorylation by SRC and inhibits all actin-modifying activities. Binding to PIP2 inhibits actin-capping and -severing activities but enhances actin-bundling activity. Regulates the intestinal epithelial cell morphology, cell invasion, cell migration and apoptosis. Protects against apoptosis induced by dextran sodium sulfate (DSS) in the gastrointestinal epithelium. Appears to regulate cell death by maintaining mitochondrial integrity. Enhances hepatocyte growth factor (HGF)-induced epithelial cell motility, chemotaxis and wound repair. This is Villin-1 (VIL1) from Bos taurus (Bovine).